Here is a 648-residue protein sequence, read N- to C-terminus: Protein KASH5 (648 aa).

At 1-606 (MHSILRSSLS…HSPGIRISQH (606 aa)) the chain is on the cytoplasmic side. The tract at residues 206–228 (PEAEESANLESFGGEDPRPEGPA) is disordered. Residues 230-420 (AELLSNLEDL…EEQLSQSQEG (191 aa)) are a coiled coil. Residues 473-497 (EVEPEPEPEPEPEPEPEPQEVEFPS) are compositionally biased toward acidic residues. The interval 473–545 (EVEPEPEPEP…EESWVLADPS (73 aa)) is disordered. A helical; Anchor for type IV membrane protein transmembrane segment spans residues 607-627 (PLVPTPVLGLLLLLLLSILLF). Over 628 to 648 (SQSPPPTWPHLQLYYLQPPPV) the chain is Perinuclear space.

As to quaternary structure, core component the LINC complex which is composed of inner nuclear membrane SUN domain-containing proteins coupled to outer nuclear membrane KASH domain-containing nesprins. SUN and KASH domain-containing proteins seem to bind each other promiscuously; however, differentially expression of LINC complex constituents is giving rise to specific assemblies. At least SUN1/2-containing core LINC complexes are proposed to be hexameric composed of three protomers of each KASH and SUN domain-containing protein. Interacts with SUN1; this interaction mediates its telomere localization by forming a SUN1:KASH5 LINC complex. Component of a probable SUN2:KASH5 LINC complex. Self-associates. Interacts with DYNC1H1, DCTN1, DYNC1I1/2 and PAFAH1B1; suggesting the association with the dynein-dynactin motor complex. As to expression, restricted to the testis and the early ootidogenesis ovary. Expressed in spermatocytes and oocytes (at protein level).

It is found in the nucleus outer membrane. It localises to the nucleus. The protein resides in the chromosome. Its subcellular location is the telomere. The protein localises to the nucleus envelope. Its function is as follows. As a component of the LINC (LInker of Nucleoskeleton and Cytoskeleton) complex, involved in the connection between the nuclear lamina and the cytoskeleton. The nucleocytoplasmic interactions established by the LINC complex play an important role in the transmission of mechanical forces across the nuclear envelope and in nuclear movement and positioning. Required for telomere attachment to nuclear envelope in the prophase of meiosis and for rapid telomere prophase movements implicating a SUN1/2:KASH5 LINC complex in which SUN1 and SUN2 seem to act at least partial redundantly. Required for homolog pairing during meiotic prophase in spermatocytes and probably oocytes. Essential for male and female gametogenesis. Recruits cytoplasmic dynein to telomere attachment sites at the nuclear envelope in spermatocytes. In oocytes is involved in meiotic resumption and spindle formation. The chain is Protein KASH5 from Mus musculus (Mouse).